Reading from the N-terminus, the 202-residue chain is Imidazoleglycerol-phosphate dehydratase (202 aa).

This sequence belongs to the imidazoleglycerol-phosphate dehydratase family. Homotrimer.

It catalyses the reaction D-erythro-1-(imidazol-4-yl)glycerol 3-phosphate = 3-(imidazol-4-yl)-2-oxopropyl phosphate + H2O. It functions in the pathway amino-acid biosynthesis; L-histidine biosynthesis; L-histidine from 5-phospho-alpha-D-ribose 1-diphosphate: step 6/9. The chain is Imidazoleglycerol-phosphate dehydratase (HIS3) from Cryptococcus neoformans var. neoformans serotype D (strain B-3501A) (Filobasidiella neoformans).